Here is a 258-residue protein sequence, read N- to C-terminus: Probable dihydroorotate dehydrogenase B (NAD(+)), electron transfer subunit (258 aa).

The FAD-binding FR-type domain maps to 1-90 (MRPISATIKE…RGPYGNGWEI (90 aa)). The [2Fe-2S] cluster site is built by Cys-210, Cys-215, Cys-218, and Cys-228.

The protein belongs to the PyrK family. As to quaternary structure, heterotetramer of 2 PyrK and 2 PyrD type B subunits. [2Fe-2S] cluster serves as cofactor. FAD is required as a cofactor.

The protein operates within pyrimidine metabolism; UMP biosynthesis via de novo pathway; orotate from (S)-dihydroorotate (NAD(+) route): step 1/1. Functionally, responsible for channeling the electrons from the oxidation of dihydroorotate from the FMN redox center in the PyrD type B subunit to the ultimate electron acceptor NAD(+). This chain is Probable dihydroorotate dehydrogenase B (NAD(+)), electron transfer subunit, found in Methanocella arvoryzae (strain DSM 22066 / NBRC 105507 / MRE50).